Reading from the N-terminus, the 373-residue chain is 4-hydroxy-3-methylbut-2-en-1-yl diphosphate synthase (flavodoxin) (373 aa).

Residues Cys270, Cys273, Cys305, and Glu312 each contribute to the [4Fe-4S] cluster site.

The protein belongs to the IspG family. [4Fe-4S] cluster is required as a cofactor.

The enzyme catalyses (2E)-4-hydroxy-3-methylbut-2-enyl diphosphate + oxidized [flavodoxin] + H2O + 2 H(+) = 2-C-methyl-D-erythritol 2,4-cyclic diphosphate + reduced [flavodoxin]. Its pathway is isoprenoid biosynthesis; isopentenyl diphosphate biosynthesis via DXP pathway; isopentenyl diphosphate from 1-deoxy-D-xylulose 5-phosphate: step 5/6. In terms of biological role, converts 2C-methyl-D-erythritol 2,4-cyclodiphosphate (ME-2,4cPP) into 1-hydroxy-2-methyl-2-(E)-butenyl 4-diphosphate. The chain is 4-hydroxy-3-methylbut-2-en-1-yl diphosphate synthase (flavodoxin) from Pectobacterium atrosepticum (strain SCRI 1043 / ATCC BAA-672) (Erwinia carotovora subsp. atroseptica).